A 91-amino-acid chain; its full sequence is Small ribosomal subunit protein bS20 (91 aa).

The segment covering 1–21 (MPLHKSAEKRLRQSARRNERN) has biased composition (basic and acidic residues). Disordered stretches follow at residues 1–25 (MPLH…RARK) and 70–91 (PNKA…MKAE). Over residues 70–79 (PNKASRKKSQ) the composition is skewed to basic residues.

It belongs to the bacterial ribosomal protein bS20 family.

Its function is as follows. Binds directly to 16S ribosomal RNA. This chain is Small ribosomal subunit protein bS20, found in Chlorobium phaeobacteroides (strain BS1).